Reading from the N-terminus, the 392-residue chain is DNA polymerase IV (392 aa).

The 181-residue stretch at Ile6–Gly186 folds into the UmuC domain. Positions 10 and 103 each coordinate Mg(2+). Glu104 is an active-site residue.

It belongs to the DNA polymerase type-Y family. Monomer. Mg(2+) serves as cofactor.

The protein resides in the cytoplasm. It catalyses the reaction DNA(n) + a 2'-deoxyribonucleoside 5'-triphosphate = DNA(n+1) + diphosphate. Poorly processive, error-prone DNA polymerase involved in untargeted mutagenesis. Copies undamaged DNA at stalled replication forks, which arise in vivo from mismatched or misaligned primer ends. These misaligned primers can be extended by PolIV. Exhibits no 3'-5' exonuclease (proofreading) activity. May be involved in translesional synthesis, in conjunction with the beta clamp from PolIII. The protein is DNA polymerase IV of Opitutus terrae (strain DSM 11246 / JCM 15787 / PB90-1).